We begin with the raw amino-acid sequence, 350 residues long: Ion-translocating oxidoreductase complex subunit D (350 aa).

Transmembrane regions (helical) follow at residues Y37–A57, A78–V109, A124–A144, and T158–I178. Residue T185 is modified to FMN phosphoryl threonine. 5 helical membrane passes run S212 to L232, W239 to I259, F264 to A284, L298 to P318, and D319 to V339.

It belongs to the NqrB/RnfD family. As to quaternary structure, the complex is composed of six subunits: RnfA, RnfB, RnfC, RnfD, RnfE and RnfG. It depends on FMN as a cofactor.

It localises to the cell inner membrane. Its function is as follows. Part of a membrane-bound complex that couples electron transfer with translocation of ions across the membrane. This chain is Ion-translocating oxidoreductase complex subunit D, found in Shewanella frigidimarina (strain NCIMB 400).